The primary structure comprises 205 residues: HTH-type transcriptional repressor KstR2 (205 aa).

Positions 10–70 (ASRRDELLQL…EVLRDFLDWL (61 aa)) constitute an HTH tetR-type domain. The segment at residues 33–52 (TVRDIADSAGILSGSLYHHF) is a DNA-binding region (H-T-H motif).

As to quaternary structure, homodimer.

Its function is as follows. Controls the expression of a small regulon that may play a role in the utilization of cholesterol. In Mycolicibacterium smegmatis (strain ATCC 700084 / mc(2)155) (Mycobacterium smegmatis), this protein is HTH-type transcriptional repressor KstR2 (kstR2).